The chain runs to 432 residues: Asparagine--tRNA ligase (432 aa).

The protein belongs to the class-II aminoacyl-tRNA synthetase family. As to quaternary structure, homodimer.

It localises to the cytoplasm. It catalyses the reaction tRNA(Asn) + L-asparagine + ATP = L-asparaginyl-tRNA(Asn) + AMP + diphosphate + H(+). In Lacticaseibacillus paracasei (strain ATCC 334 / BCRC 17002 / CCUG 31169 / CIP 107868 / KCTC 3260 / NRRL B-441) (Lactobacillus paracasei), this protein is Asparagine--tRNA ligase.